The following is a 148-amino-acid chain: MAGRKGGERKKAVTRSVKAGLQFPVGRIGRYLKKGRYAQAVGSGAPVYLAAVLEYLAAEVLELAGNAAKDNKKTRIIPRHLLLAVRNDQELGRLLAGVTIAHGGVIPNINSVLLPKKAAGAAEKESTKSPKKKAATKSPKKKTAATKE.

Positions 120-148 (GAAEKESTKSPKKKAATKSPKKKTAATKE) are disordered. 2 consecutive short sequence motifs (SPKK motif) follow at residues 129–132 (SPKK) and 138–141 (SPKK). Residues 129–148 (SPKKKAATKSPKKKTAATKE) show a composition bias toward basic residues.

This sequence belongs to the histone H2A family. The nucleosome is a histone octamer containing two molecules each of H2A, H2B, H3 and H4 assembled in one H3-H4 heterotetramer and two H2A-H2B heterodimers. The octamer wraps approximately 147 bp of DNA. Abundant in meristematic tissues.

The protein resides in the nucleus. It localises to the chromosome. Functionally, core component of nucleosome. Nucleosomes wrap and compact DNA into chromatin, limiting DNA accessibility to the cellular machineries which require DNA as a template. Histones thereby play a central role in transcription regulation, DNA repair, DNA replication and chromosomal stability. DNA accessibility is regulated via a complex set of post-translational modifications of histones, also called histone code, and nucleosome remodeling. The protein is Protein H2A.6 (H2A-3) of Triticum aestivum (Wheat).